The primary structure comprises 406 residues: LIM/homeobox protein Lhx2 (406 aa).

2 LIM zinc-binding domains span residues 53–105 (CAGC…CKED) and 115–168 (CARC…CRLH). The tract at residues 250–270 (DAEHLDRDQPYPSSQKTKRMR) is disordered. The segment at residues 266–325 (TKRMRTSFKHHQLRTMKSYFAINHNPDAKDLKQLAQKTGLTKRVLQVWFQNARAKFRRNL) is a DNA-binding region (homeobox). Positions 307 to 323 (KRVLQVWFQNARAKFRR) match the Nuclear localization signal motif. Residues 328-356 (QENTGVDKSTDAALQTGTPSGPASELSNA) are compositionally biased toward polar residues. Disordered stretches follow at residues 328–374 (QENT…TSPT) and 387–406 (GNLE…TNLF). Residues 357–374 (SLSPSSTPTTLTDLTSPT) are compositionally biased toward low complexity. Residues 396 to 406 (SPSQTTLTNLF) are compositionally biased toward polar residues.

In terms of assembly, interacts (via LIM domains) with CITED2. Interacts with POU4F2.

The protein resides in the nucleus. Its function is as follows. Acts as a transcriptional activator. Stimulates the promoter of the alpha-glycoprotein gene. Transcriptional regulatory protein involved in the control of cell differentiation in developing lymphoid and neural cell types. This is LIM/homeobox protein Lhx2 (LHX2) from Homo sapiens (Human).